Consider the following 732-residue polypeptide: E3 ubiquitin-protein ligase TRIM56 (732 aa).

An RING-type zinc finger spans residues 21–60; the sequence is CKICLEQLRVPKTLPCLHTYCQDCLAQLAEGSRLRCPECR. The B box-type zinc-finger motif lies at 164–205; it reads RQAAQCPQHPGEALRFLCQPCSQLLCRECRLDPHLDHPCLPL. Residues Cys169, His172, Cys192, and His197 each coordinate Zn(2+). The stretch at 211-286 forms a coiled coil; that stretch reads ARRPGLEELL…LRAHVEAAEE (76 aa). Positions 374-384 are enriched in basic and acidic residues; sequence LPQKDSGKDGA. A disordered region spans residues 374–462; that stretch reads LPQKDSGKDG…PAPGPNLEGS (89 aa). Residues 389–405 are compositionally biased toward polar residues; sequence GDATQPQSRDGVQTPNQ. Thr402 is subject to Phosphothreonine. The span at 407–416 shows a compositional bias: basic and acidic residues; sequence DGAKTPKESR. Thr419 carries the post-translational modification Phosphothreonine. The segment covering 434–446 has biased composition (basic residues); the sequence is SNKKRKFKGRLKS. Position 452 is a phosphoserine (Ser452).

It belongs to the TRIM/RBCC family. As to quaternary structure, interacts with STING1. Interacts with TICAM1.

It is found in the cytoplasm. The enzyme catalyses S-ubiquitinyl-[E2 ubiquitin-conjugating enzyme]-L-cysteine + [acceptor protein]-L-lysine = [E2 ubiquitin-conjugating enzyme]-L-cysteine + N(6)-ubiquitinyl-[acceptor protein]-L-lysine.. Its pathway is protein modification; protein ubiquitination. Functionally, E3 ubiquitin-protein ligase that plays a key role in innate antiviral immunity by mediating ubiquitination of CGAS and STING1. In response to pathogen- and host-derived double-stranded DNA (dsDNA), targets STING1 to 'Lys-63'-linked ubiquitination, thereby promoting its homodimerization, a step required for the production of type I interferon IFN-beta. Also mediate monoubiquitination of CGAS, thereby promoting CGAS oligomerization and subsequent activation. Independently of its E3 ubiquitin ligase activity, positive regulator of TLR3 signaling. Potentiates extracellular double stranded RNA (dsRNA)-induced expression of IFNB1 and interferon-stimulated genes ISG15, IFIT1/ISG56, CXCL10, OASL and CCL5/RANTES. Restricts bovine viral diarrhea virus (BVDV) replication. In Bos taurus (Bovine), this protein is E3 ubiquitin-protein ligase TRIM56.